The sequence spans 317 residues: Ribose-phosphate pyrophosphokinase (317 aa).

ATP is bound by residues 43–45 and 102–103; these read DGE and RQ. Lysine 106 and arginine 110 together coordinate ADP. Histidine 136 is a binding site for Mg(2+). Residues glutamine 141 and 149-150 contribute to the ADP site; that span reads DH. A Mg(2+)-binding site is contributed by aspartate 175. Residue lysine 198 is part of the active site. Residues arginine 200, aspartate 224, and 228–232 each bind D-ribose 5-phosphate; that span reads DTAGT. Position 311–313 (311–313) interacts with ADP; the sequence is SVS.

It belongs to the ribose-phosphate pyrophosphokinase family. Class I subfamily. In terms of assembly, homohexamer; trimer of dimers. Requires Mg(2+) as cofactor.

It is found in the cytoplasm. It catalyses the reaction D-ribose 5-phosphate + ATP = 5-phospho-alpha-D-ribose 1-diphosphate + AMP + H(+). It participates in metabolic intermediate biosynthesis; 5-phospho-alpha-D-ribose 1-diphosphate biosynthesis; 5-phospho-alpha-D-ribose 1-diphosphate from D-ribose 5-phosphate (route I): step 1/1. Its activity is regulated as follows. Activated by inorganic phosphate, and to a lesser extent by sulfate ions. In addition to form a complex with ATP, Mg(2+) also acts as a cofactor. Strongly inhibited by ADP through competitive binding at the activation site and at a specific allosteric site. Less strongly inhibited by alpha,beta-methylene ATP (mADP), AMP, GDP, GMP and UTP. Involved in the biosynthesis of the central metabolite phospho-alpha-D-ribosyl-1-pyrophosphate (PRPP) via the transfer of pyrophosphoryl group from ATP to 1-hydroxyl of ribose-5-phosphate (Rib-5-P). This Bacillus subtilis (strain 168) protein is Ribose-phosphate pyrophosphokinase.